Here is an 872-residue protein sequence, read N- to C-terminus: Paladin (872 aa).

The segment at 1–37 is disordered; the sequence is MGTTASAAQQVPSTVPSSENVQGNGSGSSNVEDRNSL. Residue Gly2 is the site of N-myristoyl glycine attachment. Residues 186 to 210 adopt a coiled-coil conformation; it reads RRKENLHENLHDLEKGLRAENLELA.

The protein belongs to the paladin family.

The protein resides in the cytoplasm. It is found in the cytosol. The chain is Paladin (pald1) from Xenopus tropicalis (Western clawed frog).